Reading from the N-terminus, the 109-residue chain is Putative glutaredoxin-C11 (109 aa).

The Glutaredoxin domain occupies 2 to 108; sequence AEMVARLASE…PLLKSAGALW (107 aa). Residues cysteine 22 and cysteine 25 are joined by a disulfide bond. Positions 106-109 match the Responsive for interaction with TGA factors motif; the sequence is ALWL.

This sequence belongs to the glutaredoxin family. CC-type subfamily.

It is found in the cytoplasm. The protein resides in the nucleus. In terms of biological role, has a glutathione-disulfide oxidoreductase activity in the presence of NADPH and glutathione reductase. Reduces low molecular weight disulfides and proteins. The protein is Putative glutaredoxin-C11 (GRXC11) of Oryza sativa subsp. japonica (Rice).